A 529-amino-acid chain; its full sequence is G-protein coupled receptor 161 (529 aa).

Residues 1 to 30 (MSLNSSLSCRKELSNLTEEEGGEGGVIITQ) are Extracellular-facing. N-linked (GlcNAc...) asparagine glycans are attached at residues Asn-4 and Asn-15. A helical transmembrane segment spans residues 31 to 51 (FIAIIVITIFVCLGNLVIVVT). The Cytoplasmic segment spans residues 52–64 (LYKKSYLLTLSNK). Residues 65-85 (FVFSLTLSNFLLSVLVLPFVV) traverse the membrane as a helical segment. The Extracellular portion of the chain corresponds to 86 to 101 (TSSIRREWIFGVVWCN). The cysteines at positions 100 and 178 are disulfide-linked. The helical transmembrane segment at 102 to 123 (FSALLYLLISSASMLTLGVIAI) threads the bilayer. Residues 124 to 143 (DRYYAVLYPMVYPMKITGNR) lie on the Cytoplasmic side of the membrane. Residues 144–164 (AVMALVYIWLHSLIGCLPPLF) traverse the membrane as a helical segment. Residues 165-190 (GWSSVEFDEFKWMCVAAWHREPGYTA) lie on the Extracellular side of the membrane. A helical transmembrane segment spans residues 191 to 211 (FWQIWCALFPFLVMLVCYGFI). Topologically, residues 212 to 269 (FRVARVKARKVHCGTVVIVEEDAQRTGRKNSSTSTSSSGSRRNAFQGVVYSANQCKAL) are cytoplasmic. A helical membrane pass occupies residues 270 to 290 (ITILVVLGAFMVTWGPYMVVI). Over 291–306 (ASEALWGKSSVSPSLE) the chain is Extracellular. A helical membrane pass occupies residues 307–327 (TWATWLSFASAVCHPLIYGLW). Topologically, residues 328 to 529 (NKTVRKELLG…EGDVLAAEQR (202 aa)) are cytoplasmic.

Belongs to the G-protein coupled receptor 1 family.

The protein resides in the cell projection. Its subcellular location is the cilium membrane. It localises to the cell membrane. Functionally, key negative regulator of Shh signaling, which promotes the processing of GLI3 into GLI3R during neural tube development. Recruited by TULP3 and the IFT-A complex to primary cilia and acts as a regulator of the PKA-dependent basal repression machinery in Shh signaling by increasing cAMP levels, leading to promote the PKA-dependent processing of GLI3 into GLI3R and repress the Shh signaling. In presence of SHH, it is removed from primary cilia and is internalized into recycling endosomes, preventing its activity and allowing activation of the Shh signaling. Its ligand is unknown. The protein is G-protein coupled receptor 161 (GPR161) of Homo sapiens (Human).